Consider the following 450-residue polypeptide: Tubulin alpha chain (450 aa).

Residues Q11, E71, S140, G144, T145, T179, N206, and N228 each contribute to the GTP site. Residue E71 participates in Mg(2+) binding. Residue E254 is part of the active site.

The protein belongs to the tubulin family. In terms of assembly, dimer of alpha and beta chains. A typical microtubule is a hollow water-filled tube with an outer diameter of 25 nm and an inner diameter of 15 nM. Alpha-beta heterodimers associate head-to-tail to form protofilaments running lengthwise along the microtubule wall with the beta-tubulin subunit facing the microtubule plus end conferring a structural polarity. Microtubules usually have 13 protofilaments but different protofilament numbers can be found in some organisms and specialized cells. Requires Mg(2+) as cofactor.

It localises to the cytoplasm. It is found in the cytoskeleton. It catalyses the reaction GTP + H2O = GDP + phosphate + H(+). In terms of biological role, tubulin is the major constituent of microtubules, a cylinder consisting of laterally associated linear protofilaments composed of alpha- and beta-tubulin heterodimers. Microtubules grow by the addition of GTP-tubulin dimers to the microtubule end, where a stabilizing cap forms. Below the cap, tubulin dimers are in GDP-bound state, owing to GTPase activity of alpha-tubulin. In Zymoseptoria tritici (Speckled leaf blotch fungus), this protein is Tubulin alpha chain.